A 322-amino-acid chain; its full sequence is Stage V sporulation protein K (322 aa).

An ATP-binding site is contributed by 99-106; that stretch reads GNPGTGKT.

The protein belongs to the CbxX/CfxQ family.

The protein is Stage V sporulation protein K (spoVK) of Bacillus subtilis (strain 168).